Consider the following 510-residue polypeptide: Probable DNA ligase (510 aa).

Glutamate 210 serves as a coordination point for ATP. Lysine 212 functions as the N6-AMP-lysine intermediate in the catalytic mechanism. ATP contacts are provided by arginine 217, arginine 232, glutamate 261, phenylalanine 296, arginine 367, and lysine 373.

It belongs to the ATP-dependent DNA ligase family. The cofactor is Mg(2+).

The enzyme catalyses ATP + (deoxyribonucleotide)n-3'-hydroxyl + 5'-phospho-(deoxyribonucleotide)m = (deoxyribonucleotide)n+m + AMP + diphosphate.. DNA ligase that seals nicks in double-stranded DNA during DNA replication, DNA recombination and DNA repair. The polypeptide is Probable DNA ligase (Saccharopolyspora erythraea (strain ATCC 11635 / DSM 40517 / JCM 4748 / NBRC 13426 / NCIMB 8594 / NRRL 2338)).